Reading from the N-terminus, the 359-residue chain is DNA replication and repair protein RecF (359 aa).

Residue 30–37 coordinates ATP; sequence GPNGSGKT.

This sequence belongs to the RecF family.

The protein localises to the cytoplasm. Its function is as follows. The RecF protein is involved in DNA metabolism; it is required for DNA replication and normal SOS inducibility. RecF binds preferentially to single-stranded, linear DNA. It also seems to bind ATP. This is DNA replication and repair protein RecF from Aliivibrio fischeri (strain ATCC 700601 / ES114) (Vibrio fischeri).